Consider the following 273-residue polypeptide: Undecaprenyl-diphosphatase (273 aa).

7 consecutive transmembrane segments (helical) span residues 6-26 (SLLI…LPVS), 45-65 (AKTF…VMFW), 90-110 (LTLI…LVFH), 116-136 (LFNP…LIAA), 190-210 (YAAS…ATVL), 222-242 (ADIP…LIAI), and 252-272 (ISFI…YVVF).

It belongs to the UppP family.

The protein localises to the cell inner membrane. The catalysed reaction is di-trans,octa-cis-undecaprenyl diphosphate + H2O = di-trans,octa-cis-undecaprenyl phosphate + phosphate + H(+). Catalyzes the dephosphorylation of undecaprenyl diphosphate (UPP). Confers resistance to bacitracin. In Salmonella paratyphi C (strain RKS4594), this protein is Undecaprenyl-diphosphatase.